The primary structure comprises 469 residues: Zinc transporter SLC39A7 (469 aa).

Residues 10–30 (WVAVGLLTWATLGLLVAELGG) traverse the membrane as a helical segment. Composition is skewed to basic and acidic residues over residues 42-56 (FHGHSHRHSHEDFHH) and 66-114 (HTHE…EHSR). Residues 42–121 (FHGHSHRHSH…HSRGGYGESG (80 aa)) form a disordered region. Position 66 is a pros-methylhistidine (His-66). A run of 3 helical transmembrane segments spans residues 138–158 (ALGATVLISAAPFFVLFLIPV), 169–189 (LQILLSFASGGLLGDAFLHLI), and 214–234 (GPILSVGLWVLSGIVAFLVVE). Basic residues predominate over residues 242 to 263 (GGHGHSHGHGHAHSHTHGSHGH). The segment at 242 to 310 (GGHGHSHGHG…VRPQNAEEEK (69 aa)) is disordered. Over residues 264-285 (GRQECSTKEKQSSEEEEKETRG) the composition is skewed to basic and acidic residues. A phosphoserine mark is found at Ser-275 and Ser-276. A run of 3 helical transmembrane segments spans residues 386–406 (LTAVGALAGTACALLTEGGAV), 410–430 (IAGGAGPGWVLPFTAGGFIYV), and 448–468 (SLLEVLGLLGGVVMMVLIAHL).

The protein belongs to the ZIP transporter (TC 2.A.5) family. KE4/Catsup subfamily. In terms of assembly, homodimer. Methylation at some His residue by METTL9 leads to reduced zinc-binding. Post-translationally, rapidly phosphorylated by CK2 following Zn(2+) treatment. This phosphorylation is required for efficient cytosolic Zn(2+) release.

Its subcellular location is the endoplasmic reticulum membrane. It is found in the golgi apparatus. The protein resides in the cis-Golgi network membrane. It carries out the reaction Zn(2+)(in) = Zn(2+)(out). Functionally, transports Zn(2+) from the endoplasmic reticulum (ER)/Golgi apparatus to the cytosol, playing an essential role in the regulation of cytosolic zinc levels. Acts as a gatekeeper of zinc release from intracellular stores, requiring post-translational activation by phosphorylation, resulting in activation of multiple downstream pathways leading to cell growth and proliferation. Has an essential role in B cell development and is required for proper B cell receptor signaling. Plays an important role in maintaining intestinal epithelial homeostasis and skin dermis development by regulating ER function. Controls cell signaling pathways involved in glucose metabolism in skeletal muscle. Has a protective role against ER stress in different biological contexts. Mediates Zn(2+)-induced ferroptosis. This Pongo abelii (Sumatran orangutan) protein is Zinc transporter SLC39A7.